The following is a 273-amino-acid chain: Ethanolamine ammonia-lyase small subunit (273 aa).

3 residues coordinate adenosylcob(III)alamin: V164, E185, and C214.

Belongs to the EutC family. In terms of assembly, the basic unit is a heterodimer which dimerizes to form tetramers. The heterotetramers trimerize; 6 large subunits form a core ring with 6 small subunits projecting outwards. It depends on adenosylcob(III)alamin as a cofactor.

It localises to the bacterial microcompartment. The catalysed reaction is ethanolamine = acetaldehyde + NH4(+). It functions in the pathway amine and polyamine degradation; ethanolamine degradation. Functionally, catalyzes the deamination of various vicinal amino-alcohols to oxo compounds. Allows this organism to utilize ethanolamine as the sole source of nitrogen and carbon in the presence of external vitamin B12. The protein is Ethanolamine ammonia-lyase small subunit of Pseudomonas aeruginosa (strain LESB58).